A 519-amino-acid polypeptide reads, in one-letter code: Serine/threonine-protein kinase RIO3 (519 aa).

A phosphoserine mark is found at Ser-8, Ser-112, Ser-125, Ser-127, and Ser-128. Residues 122–159 (FEDSDSSEDEVDWQDTRDDPYRPAKPIPTPKKGFIGKG) form a disordered region. Positions 124–134 (DSDSSEDEVDW) are enriched in acidic residues. In terms of domain architecture, Protein kinase spans 251–519 (ETITGCISTG…DGSPPVLSAD (269 aa)). ATP is bound by residues 257-265 (ISTGKESVV) and Lys-290. Asp-406 functions as the Proton acceptor in the catalytic mechanism. At Ser-512 the chain carries Phosphoserine.

This sequence belongs to the protein kinase superfamily. RIO-type Ser/Thr kinase family. In terms of assembly, interacts with CASP10. Interacts with IRF3; RIOK3 probably mediates the interaction of TBK1 with IRF3. Associated with 40S pre-ribosomal particles. Mg(2+) is required as a cofactor. Autophosphorylated (in vitro).

The protein localises to the cytoplasm. It catalyses the reaction L-seryl-[protein] + ATP = O-phospho-L-seryl-[protein] + ADP + H(+). The enzyme catalyses L-threonyl-[protein] + ATP = O-phospho-L-threonyl-[protein] + ADP + H(+). In terms of biological role, involved in regulation of type I interferon (IFN)-dependent immune response which plays a critical role in the innate immune response against DNA and RNA viruses. May act as an adapter protein essential for the recruitment of TBK1 to IRF3. Phosphorylates IFIH1 on 'Ser-828' interfering with IFIH1 filament assembly on long dsRNA and resulting in attenuated IFIH1-signaling. Can inhibit CASP10 isoform 7-mediated activation of the NF-kappaB signaling pathway. May play a role in the biogenesis of the 40S ribosomal subunit. Involved in the processing of 21S pre-rRNA to the mature 18S rRNA. This chain is Serine/threonine-protein kinase RIO3 (Riok3), found in Mus musculus (Mouse).